The following is a 292-amino-acid chain: Homoserine kinase (292 aa).

Residue 84 to 94 (PLSRGLGSSSA) participates in ATP binding.

The protein belongs to the GHMP kinase family. Homoserine kinase subfamily.

It is found in the cytoplasm. It carries out the reaction L-homoserine + ATP = O-phospho-L-homoserine + ADP + H(+). It participates in amino-acid biosynthesis; L-threonine biosynthesis; L-threonine from L-aspartate: step 4/5. Catalyzes the ATP-dependent phosphorylation of L-homoserine to L-homoserine phosphate. This is Homoserine kinase from Campylobacter jejuni subsp. jejuni serotype O:6 (strain 81116 / NCTC 11828).